The primary structure comprises 1196 residues: Truncated transposon Ty1-A Gag-Pol polyprotein (1196 aa).

An Integrase catalytic domain is found at 101-276 (NSYEPFQYLH…AGLDISTLLP (176 aa)). Positions 112 and 177 each coordinate Mg(2+). Disordered regions lie at residues 397–528 (SKAV…ETEK), 533–552 (RSPS…NIVP), and 571–628 (DLPL…DNET). Positions 401–410 (SPTDSTPPST) are enriched in low complexity. A compositionally biased stretch (polar residues) spans 446–456 (STPQISNIEST). Positions 479 to 494 (ESSHASKSKDFRHSDS) are enriched in basic and acidic residues. 2 stretches are compositionally biased toward polar residues: residues 495–523 (YSEN…QISD) and 542–552 (PENNSSHNIVP). The Bipartite nuclear localization signal signature appears at 619 to 653 (KKRSLEDNETEIKVSRDTWNTKNMRSLEPPRSKKR). A Reverse transcriptase Ty1/copia-type domain is found at 779–917 (NNYYITQLDI…DILGLEIKYQ (139 aa)). Mg(2+)-binding residues include D787, D868, D869, D1051, E1093, and D1126. The region spanning 1051-1193 (DASYGNQPYY…IKTFKLLTNK (143 aa)) is the RNase H Ty1/copia-type domain.

In terms of processing, initially, virus-like particles (VLPs) are composed of the structural unprocessed proteins Gag and Gag-Pol, and also contain the host initiator methionine tRNA (tRNA(i)-Met) which serves as a primer for minus-strand DNA synthesis, and a dimer of genomic Ty RNA. Processing of the polyproteins occurs within the particle and proceeds by an ordered pathway, called maturation. First, the protease (PR) is released by autocatalytic cleavage of the Gag-Pol polyprotein yielding capsid protein p45 and a Pol-p154 precursor protein. This cleavage is a prerequisite for subsequent processing of Pol-p154 at the remaining sites to release the mature structural and catalytic proteins. Maturation takes place prior to the RT reaction and is required to produce transposition-competent VLPs.

The protein localises to the cytoplasm. Its subcellular location is the nucleus. It carries out the reaction DNA(n) + a 2'-deoxyribonucleoside 5'-triphosphate = DNA(n+1) + diphosphate. The catalysed reaction is Endonucleolytic cleavage to 5'-phosphomonoester.. Functionally, reverse transcriptase/ribonuclease H (RT) is a multifunctional enzyme that catalyzes the conversion of the retro-elements RNA genome into dsDNA within the VLP. The enzyme displays a DNA polymerase activity that can copy either DNA or RNA templates, and a ribonuclease H (RNase H) activity that cleaves the RNA strand of RNA-DNA heteroduplexes during plus-strand synthesis and hydrolyzes RNA primers. The conversion leads to a linear dsDNA copy of the retrotransposon that includes long terminal repeats (LTRs) at both ends. In terms of biological role, integrase (IN) targets the VLP to the nucleus, where a subparticle preintegration complex (PIC) containing at least integrase and the newly synthesized dsDNA copy of the retrotransposon must transit the nuclear membrane. Once in the nucleus, integrase performs the integration of the dsDNA into the host genome. The sequence is that of Truncated transposon Ty1-A Gag-Pol polyprotein (TY1B-A) from Saccharomyces cerevisiae (strain ATCC 204508 / S288c) (Baker's yeast).